Consider the following 308-residue polypeptide: Porphobilinogen deaminase (308 aa).

S-(dipyrrolylmethanemethyl)cysteine is present on Cys241.

It belongs to the HMBS family. In terms of assembly, monomer. Requires dipyrromethane as cofactor.

The catalysed reaction is 4 porphobilinogen + H2O = hydroxymethylbilane + 4 NH4(+). Its pathway is porphyrin-containing compound metabolism; protoporphyrin-IX biosynthesis; coproporphyrinogen-III from 5-aminolevulinate: step 2/4. Its function is as follows. Tetrapolymerization of the monopyrrole PBG into the hydroxymethylbilane pre-uroporphyrinogen in several discrete steps. This Staphylococcus carnosus (strain TM300) protein is Porphobilinogen deaminase.